Reading from the N-terminus, the 778-residue chain is Gelsolin (778 aa).

Residues 1 to 23 form the signal peptide; it reads MGKQGFGYIFLTIFCTMALKLNC. The tract at residues 49–172 is actin-severing; sequence MVEHAEFSKA…YKAGGVASGF (124 aa). The stretch at 72 to 154 is one Gelsolin-like 1 repeat; sequence FDLVPVPKNL…VQGHESSTFL (83 aa). The Ca(2+) site is built by G88, D89, E120, D132, G137, and A139. The tract at residues 119 to 122 is actin-actin interfilament contact point; that stretch reads DERG. 158-165 provides a ligand contact to a 1,2-diacyl-sn-glycero-3-phospho-(1D-myo-inositol-4,5-bisphosphate); that stretch reads KSGIKYKA. V168 lines the Ca(2+) pocket. 184–192 contributes to the a 1,2-diacyl-sn-glycero-3-phospho-(1D-myo-inositol-4,5-bisphosphate) binding site; sequence RLLQVKGRR. One copy of the Gelsolin-like 2 repeat lies at 193–266; it reads TVRATEVPVS…SEEGAEREEM (74 aa). Ca(2+) contacts are provided by G209 and D210. Residues C211 and C224 are joined by a disulfide bond. 18 residues coordinate Ca(2+): E232, D282, E325, D326, E350, G467, D468, E498, D510, G515, P517, T547, N587, D588, E610, D692, D693, and E715. Gelsolin-like repeat units lie at residues 313–385 and 451–532; these read DENP…TPLF and SEKV…PHLM. Positions 430-778 are actin-binding, Ca-sensitive; the sequence is AAQHGMEDDG…LQRAMADVDV (349 aa). Gelsolin-like repeat units lie at residues 574–638 and 677–752; these read AVEL…DNFW and IEEV…PPTF.

Belongs to the villin/gelsolin family. In terms of assembly, binds to actin and to fibronectin. In terms of tissue distribution, highly expressed in homogene cells of the basilar papilla. Also detected in subcutaneous layer of the skin.

It is found in the secreted. Its subcellular location is the cytoplasm. The protein resides in the cytoskeleton. Calcium-regulated, actin-modulating protein that binds to the plus (or barbed) ends of actin monomers or filaments, preventing monomer exchange (end-blocking or capping). It can promote the assembly of monomers into filaments (nucleation) as well as sever filaments already formed. Plays a role in ciliogenesis. The polypeptide is Gelsolin (GSN) (Gallus gallus (Chicken)).